An 870-amino-acid polypeptide reads, in one-letter code: A-kinase anchor protein 2 (870 aa).

2 disordered regions span residues 14–43 (PGIT…DHHE) and 103–165 (IEKA…SSRD). Position 122 is a phosphoserine (S122). The segment covering 133-151 (GHSTDQPQDMLGNSLQAPA) has biased composition (polar residues). Phosphoserine is present on S152. Low complexity predominate over residues 152–161 (SPSSSTSSHC). A Glycyl lysine isopeptide (Lys-Gly) (interchain with G-Cter in SUMO1); alternate cross-link involves residue K174. K174 is covalently cross-linked (Glycyl lysine isopeptide (Lys-Gly) (interchain with G-Cter in SUMO2); alternate). Residues 213-307 (EEMIELEKER…QQQQLSTSQL (95 aa)) adopt a coiled-coil conformation. The segment at 233–324 (KNPGIAAKWW…EHLDSIEHTK (92 aa)) is disordered. The segment covering 259-274 (LESHRKYKERKEKRAQ) has biased composition (basic and acidic residues). A compositionally biased stretch (low complexity) spans 275–302 (QEQLQLQQQQQQQLQQLQQLQQQQQQQL). A compositionally biased stretch (basic and acidic residues) spans 313–324 (AHEHLDSIEHTK). S347 carries the phosphoserine modification. Residues 409–436 (ESQSAGAGTGNAATQGKEGPYSEPSKRG) form a disordered region. Low complexity predominate over residues 410–424 (SQSAGAGTGNAATQG). 3 positions are modified to phosphoserine: S472, S476, and S528. A compositionally biased stretch (polar residues) spans 506–543 (FSMDNISDSGASNETPNALQENSLADFSLPQTPQTDNP). Disordered regions lie at residues 506–577 (FSMD…DPLE) and 595–688 (QVDK…RPEG). Residue T537 is modified to Phosphothreonine. Residues 576–589 (LEYQAGLLVQNAIQ) are PKA-RII subunit binding domain. Residues 595 to 608 (QVDKAEVHTSKEGS) show a composition bias toward basic and acidic residues. Residue S641 is modified to Phosphoserine. A compositionally biased stretch (basic and acidic residues) spans 644-665 (QEKRDVLPKILPGEDKTLREKG). Residues 720–755 (KLRSRKQRTLSMIEEEIRAAQEREEELKRQRQVRQS) adopt a coiled-coil conformation. 4 positions are modified to phosphoserine: S730, S758, S789, and S796. The segment at 740-814 (QEREEELKRQ…EAAGAQRPKN (75 aa)) is disordered. Residues 755–774 (STPSPRAQNAPSLPSRTTCY) show a composition bias toward polar residues.

Its subcellular location is the apical cell membrane. Its function is as follows. Binds to regulatory subunit (RII) of protein kinase A. May be involved in establishing polarity in signaling systems or in integrating PKA-RII isoforms with downstream effectors to capture, amplify and focus diffuse, trans-cellular signals carried by cAMP. Binds to and modulates the structure of the actin cytoskeleton. The sequence is that of A-kinase anchor protein 2 from Rattus norvegicus (Rat).